We begin with the raw amino-acid sequence, 295 residues long: Zinc finger transcription factor pqm-1 (295 aa).

Residues 1–23 (MSFLNNDFGSPPATSSPPTTMPK) form a disordered region. The segment covering 10–22 (SPPATSSPPTTMP) has biased composition (low complexity). The segment at 161 to 183 (YMCTVCRKVYGRYNSVSYHVTIY) adopts a C2H2-type 1; degenerate zinc-finger fold. The C2H2-type 2 zinc finger occupies 227 to 249 (RKCPHCRHVSKSPAMLEKHIRRH).

Belongs to the krueppel C2H2-type zinc-finger protein family. As to quaternary structure, interacts with ceh-60.

It is found in the chromosome. The protein localises to the nucleus. The protein resides in the cytoplasm. Zinc finger transcription factor which acts as both a transcriptional activator and repressor. Binds to the promoters of genes that contain the 5'-CTTATCA-3' DNA consensus sequence in their regulatory region. Functions downstream of the Insulin/IGF-1-like signaling (IIS) mediated pathway. Involved in normal development, lifespan, stress response, lipid metabolism, innate immunity and exit from the developmentally arrested larval state known as dauer. Required for stress-induced expression of hsp-90 and resistance to heat stress, perhaps as part of a systemic stress signaling pathway. Involved in maintenance of proteostasis. Under hypoxic stress increases lipid levels by positively regulating fatty acid synthesis via fat-7 expression. Associates with homeobox protein ceh-60 at the promoters of some stress-responsive genes to regulate expression; may require phosphorylation for transcriptional repression activity. Acts downstream of nhr-14 to activate transcription of intestinal metal transporter smf-3, modulating innate immunity and iron uptake. May act downstream of the mTORC2 signaling mediated pathway. May act in a mutually exclusive manner with the FOXO transcription factor daf-16. The protein is Zinc finger transcription factor pqm-1 of Caenorhabditis elegans.